A 769-amino-acid chain; its full sequence is Phenylalanine--tRNA ligase beta subunit (769 aa).

The tRNA-binding domain maps to 40–141 (GKLLTIARVA…GEPIPGCEPD (102 aa)). The B5 domain occupies 389–467 (PAPPPIELPL…RMIGYDSIAP (79 aa)). Mg(2+)-binding residues include D445, D451, E454, and E455. The FDX-ACB domain maps to 676–768 (RRYPSSAFDL…GMRAKGYELR (93 aa)).

It belongs to the phenylalanyl-tRNA synthetase beta subunit family. Type 1 subfamily. As to quaternary structure, tetramer of two alpha and two beta subunits. It depends on Mg(2+) as a cofactor.

It localises to the cytoplasm. It catalyses the reaction tRNA(Phe) + L-phenylalanine + ATP = L-phenylalanyl-tRNA(Phe) + AMP + diphosphate + H(+). The protein is Phenylalanine--tRNA ligase beta subunit of Solibacter usitatus (strain Ellin6076).